The sequence spans 190 residues: uncharacterized protein (190 aa).

Positions M1–A18 are cleaved as a signal peptide. C19 is lipidated: N-palmitoyl cysteine. The S-diacylglycerol cysteine moiety is linked to residue C19. Low complexity predominate over residues A162–S182. Residues A162–Y190 are disordered.

The protein resides in the cell membrane. This is an uncharacterized protein from Escherichia coli (strain K12).